The sequence spans 58 residues: Photosystem II reaction center protein K (58 aa).

A propeptide spanning residues 1–21 (MLAIFNIYLDNAFHLNGIILA) is cleaved from the precursor. The chain crosses the membrane as a helical span at residues 29 to 49 (IFDPIVDVMPIIPVFFFLLAF).

Belongs to the PsbK family. In terms of assembly, PSII is composed of 1 copy each of membrane proteins PsbA, PsbB, PsbC, PsbD, PsbE, PsbF, PsbH, PsbI, PsbJ, PsbK, PsbL, PsbM, PsbT, PsbX, PsbY, PsbZ, Psb30/Ycf12, at least 3 peripheral proteins of the oxygen-evolving complex and a large number of cofactors. It forms dimeric complexes.

Its subcellular location is the plastid. It is found in the chloroplast thylakoid membrane. One of the components of the core complex of photosystem II (PSII). PSII is a light-driven water:plastoquinone oxidoreductase that uses light energy to abstract electrons from H(2)O, generating O(2) and a proton gradient subsequently used for ATP formation. It consists of a core antenna complex that captures photons, and an electron transfer chain that converts photonic excitation into a charge separation. This chain is Photosystem II reaction center protein K, found in Physcomitrium patens (Spreading-leaved earth moss).